The chain runs to 118 residues: Large ribosomal subunit protein bL20 (118 aa).

The protein belongs to the bacterial ribosomal protein bL20 family.

Binds directly to 23S ribosomal RNA and is necessary for the in vitro assembly process of the 50S ribosomal subunit. It is not involved in the protein synthesizing functions of that subunit. This chain is Large ribosomal subunit protein bL20, found in Marinomonas sp. (strain MWYL1).